The following is a 230-amino-acid chain: Small ribosomal subunit protein uS3 (230 aa).

One can recognise a KH type-2 domain in the interval 39 to 107 (VRKFLVEKLQ…PAQINIAEIR (69 aa)).

This sequence belongs to the universal ribosomal protein uS3 family. In terms of assembly, part of the 30S ribosomal subunit. Forms a tight complex with proteins S10 and S14.

Its function is as follows. Binds the lower part of the 30S subunit head. Binds mRNA in the 70S ribosome, positioning it for translation. The polypeptide is Small ribosomal subunit protein uS3 (Shewanella baltica (strain OS223)).